Consider the following 572-residue polypeptide: MRTSQYLLSTLKETPADAEVVSHKLMLRAGMIRKLASGLYNWMPTGIRVLKKVEKIVREEMNNTGAIEISMPVVQPADLWQESGRWEQYGPELLRFVDRGDRPFVLGPTHEEVITDLIRNEVSSYKQLPLTLFQIQTKFRDEVRPRFGVMRSREFLMKDAYSFHATQTSLQETYDNMYEAYSKIFTRIGLDFRAVLADTGSIGGSASHEFQVLAASGEDDIVFSTESNYAANIELAEAVAPAHDRAVPTEDMHLVDTPNAKTIAELVEQFNLPIEKTVKTLMVHAAEGTSHKLIALLVRGDHELNEIKAEKLSLVASPLTFATEEEIRSIVGAGPGSLGPVNLPIPAIIDRSVAVMSDFGAGANINDKHYFGINWERDLPVPEVADIRNVVEGDASPDGKGTLLIKRGIEVGHIFQLGTKYSDAMKATVQGEDGHNQIVTMGCYGIGVTRIVAAAIEQNHDDRGIIWPDAIAPFQVAILPMNMHKSYRVKEVAEKLYADLRASGIDVIFDDRKERPGVMFADMELIGVPHTVVIGDRNLDNGEVEYKHRRNDEKQMLKLDNVVDYLKQQLGC.

This sequence belongs to the class-II aminoacyl-tRNA synthetase family. ProS type 1 subfamily. Homodimer.

The protein resides in the cytoplasm. The enzyme catalyses tRNA(Pro) + L-proline + ATP = L-prolyl-tRNA(Pro) + AMP + diphosphate. Functionally, catalyzes the attachment of proline to tRNA(Pro) in a two-step reaction: proline is first activated by ATP to form Pro-AMP and then transferred to the acceptor end of tRNA(Pro). As ProRS can inadvertently accommodate and process non-cognate amino acids such as alanine and cysteine, to avoid such errors it has two additional distinct editing activities against alanine. One activity is designated as 'pretransfer' editing and involves the tRNA(Pro)-independent hydrolysis of activated Ala-AMP. The other activity is designated 'posttransfer' editing and involves deacylation of mischarged Ala-tRNA(Pro). The misacylated Cys-tRNA(Pro) is not edited by ProRS. The sequence is that of Proline--tRNA ligase from Photorhabdus laumondii subsp. laumondii (strain DSM 15139 / CIP 105565 / TT01) (Photorhabdus luminescens subsp. laumondii).